Reading from the N-terminus, the 452-residue chain is Probable pectate lyase 9 (452 aa).

The N-terminal stretch at 1–25 (MATSSLKLTSACFVLLFIFVGCVLT) is a signal peptide. N-linked (GlcNAc...) asparagine glycans are attached at residues asparagine 88, asparagine 139, asparagine 214, and asparagine 233. Aspartate 250 contributes to the Ca(2+) binding site. Residue asparagine 271 is glycosylated (N-linked (GlcNAc...) asparagine). 2 residues coordinate Ca(2+): aspartate 274 and aspartate 278. 2 N-linked (GlcNAc...) asparagine glycosylation sites follow: asparagine 281 and asparagine 305. Arginine 330 is an active-site residue. Asparagine 374 carries an N-linked (GlcNAc...) asparagine glycan.

Belongs to the polysaccharide lyase 1 family. The cofactor is Ca(2+).

It carries out the reaction Eliminative cleavage of (1-&gt;4)-alpha-D-galacturonan to give oligosaccharides with 4-deoxy-alpha-D-galact-4-enuronosyl groups at their non-reducing ends.. It participates in glycan metabolism; pectin degradation; 2-dehydro-3-deoxy-D-gluconate from pectin: step 2/5. The sequence is that of Probable pectate lyase 9 from Arabidopsis thaliana (Mouse-ear cress).